A 194-amino-acid polypeptide reads, in one-letter code: MRKASLSRKTNETSVHLTLELDGEGTSTIETGIGFFDHMLTLLAKHGGINLDLSCDGDLEVDQHHTVEDIGIVLGQTLREALGNKEGITRYANVMSPMDEALSSIAFDISGRSYLVYNVEGLKEKVGTFDTELVQEFFQAFASNAQVTLHINLLYGVNSHHIIESIFKGFGRVIRQGCSIDLNQKGIPSTKGSL.

The protein belongs to the imidazoleglycerol-phosphate dehydratase family.

It localises to the cytoplasm. It catalyses the reaction D-erythro-1-(imidazol-4-yl)glycerol 3-phosphate = 3-(imidazol-4-yl)-2-oxopropyl phosphate + H2O. It participates in amino-acid biosynthesis; L-histidine biosynthesis; L-histidine from 5-phospho-alpha-D-ribose 1-diphosphate: step 6/9. The chain is Imidazoleglycerol-phosphate dehydratase from Oceanobacillus iheyensis (strain DSM 14371 / CIP 107618 / JCM 11309 / KCTC 3954 / HTE831).